The chain runs to 407 residues: Large ribosomal subunit protein uL3-like (407 aa).

The span at 1-31 shows a compositional bias: basic residues; it reads MSHRKFSAPRHGHLGFLPHKRSRRHRGKVKS. The interval 1 to 37 is disordered; the sequence is MSHRKFSAPRHGHLGFLPHKRSRRHRGKVKSWPRDDP.

This sequence belongs to the universal ribosomal protein uL3 family. As to quaternary structure, component of the large ribosomal subunit (LSU). Part of a LSU subcomplex, the 5S RNP which is composed of the 5S RNA, RPL5 and RPL11. Interacts with NVL in an ATP-dependent manner. Interacts with RRP1B. Interacts with IPO5, IPO7 and KPNB1; these interactions may be involved in RPL5 nuclear import for the assembly of ribosomal subunits. Interacts with RRP1B. As to expression, expression is restricted to striated muscles.

In terms of biological role, heart- and skeletal muscle-specific component of the ribosome, which regulates muscle function. Component of the large ribosomal subunit in striated muscle cells: replaces the RPL3 paralog in the ribosome in these cells. The ribosome is a large ribonucleoprotein complex responsible for the synthesis of proteins in the cell. Inhibits myotube growth and muscle function. This is Large ribosomal subunit protein uL3-like from Mus musculus (Mouse).